The sequence spans 130 residues: Histone H2B.2 (130 aa).

Positions 1 to 19 (MAPKAEKKPASKAPAEKKP) are enriched in basic and acidic residues. The segment at 1 to 38 (MAPKAEKKPASKAPAEKKPAAKKTASTDGAKKRTKARK) is disordered. N6-acetyllysine; alternate is present on residues lysine 7 and lysine 8. Residues lysine 7 and lysine 8 each participate in a glycyl lysine isopeptide (Lys-Gly) (interchain with G-Cter in SUMO); alternate cross-link. A Phosphoserine modification is found at serine 11. N6-acetyllysine is present on lysine 12. An N6-acetyllysine; alternate modification is found at lysine 17. A Glycyl lysine isopeptide (Lys-Gly) (interchain with G-Cter in SUMO); alternate cross-link involves residue lysine 17. A Glycyl lysine isopeptide (Lys-Gly) (interchain with G-Cter in SUMO) cross-link involves residue lysine 18. A Glycyl lysine isopeptide (Lys-Gly) (interchain with G-Cter in ubiquitin) cross-link involves residue lysine 124.

Belongs to the histone H2B family. In terms of assembly, the nucleosome is a histone octamer containing two molecules each of H2A, H2B, H3 and H4 assembled in one H3-H4 heterotetramer and two H2A-H2B heterodimers. The octamer wraps approximately 147 bp of DNA. Monoubiquitinated by the UBC2-BRE1 complex to form H2BK123ub1. H2BK123ub1 gives a specific tag for epigenetic transcriptional activation and is also prerequisite for H3K4me and H3K79me formation. H2BK123ub1 also modulates the formation of double-strand breaks during meiosis and is a prerequisite for DNA-damage checkpoint activation. Post-translationally, phosphorylated by STE20 to form H2BS10ph during progression through meiotic prophase. May be correlated with chromosome condensation. In terms of processing, acetylated by GCN5 to form H2BK11ac and H2BK16ac. H2BK16ac can also be formed by ESA1. Acetylation of N-terminal lysines and particularly formation of H2BK11acK16ac has a positive effect on transcription. Sumoylation to form H2BK6su or H2BK7su, and probably also H2BK16su or H2BK17su, occurs preferentially near the telomeres and represses gene transcription.

Its subcellular location is the nucleus. It localises to the chromosome. Its function is as follows. Core component of nucleosome. Nucleosomes wrap and compact DNA into chromatin, limiting DNA accessibility to the cellular machineries which require DNA as a template. Histones thereby play a central role in transcription regulation, DNA repair, DNA replication and chromosomal stability. DNA accessibility is regulated via a complex set of post-translational modifications of histones, also called histone code, and nucleosome remodeling. The polypeptide is Histone H2B.2 (HTB2) (Candida albicans (strain SC5314 / ATCC MYA-2876) (Yeast)).